A 105-amino-acid chain; its full sequence is Ferredoxin-2 (105 aa).

Positions tyrosine 4–aspartate 94 constitute a 2Fe-2S ferredoxin-type domain. [2Fe-2S] cluster contacts are provided by cysteine 40, cysteine 45, cysteine 48, and cysteine 78.

This sequence belongs to the 2Fe2S plant-type ferredoxin family. As to quaternary structure, forms a complex with heterodimeric ferredoxin-thioredoxin reductase (FTR) and thioredoxin. It depends on [2Fe-2S] cluster as a cofactor.

Its function is as follows. Ferredoxins are iron-sulfur proteins that transfer electrons in a wide variety of metabolic reactions. In Synechococcus sp. (strain ATCC 27144 / PCC 6301 / SAUG 1402/1) (Anacystis nidulans), this protein is Ferredoxin-2 (petF2).